Here is a 453-residue protein sequence, read N- to C-terminus: uncharacterized protein (453 aa).

The TRAM domain maps to 5–63 (LLKKNQSIELTIEDLTHDGSGVGKIDGYPLFIPNTLPGEKVTAKIIKLNKNYGFARMEN). Residues Cys-76, Cys-82, Cys-85, and Cys-162 each coordinate [4Fe-4S] cluster. Positions 285, 314, 335, and 383 each coordinate S-adenosyl-L-methionine. The Nucleophile role is filled by Cys-410.

The protein belongs to the class I-like SAM-binding methyltransferase superfamily. RNA M5U methyltransferase family.

This is an uncharacterized protein from Listeria monocytogenes serotype 4b (strain F2365).